Reading from the N-terminus, the 242-residue chain is Biosynthetic peptidoglycan transglycosylase (242 aa).

Residues 19–39 (LMVVLAVFWGGGIALFSVAPV) form a helical membrane-spanning segment.

This sequence belongs to the glycosyltransferase 51 family.

It is found in the cell inner membrane. The enzyme catalyses [GlcNAc-(1-&gt;4)-Mur2Ac(oyl-L-Ala-gamma-D-Glu-L-Lys-D-Ala-D-Ala)](n)-di-trans,octa-cis-undecaprenyl diphosphate + beta-D-GlcNAc-(1-&gt;4)-Mur2Ac(oyl-L-Ala-gamma-D-Glu-L-Lys-D-Ala-D-Ala)-di-trans,octa-cis-undecaprenyl diphosphate = [GlcNAc-(1-&gt;4)-Mur2Ac(oyl-L-Ala-gamma-D-Glu-L-Lys-D-Ala-D-Ala)](n+1)-di-trans,octa-cis-undecaprenyl diphosphate + di-trans,octa-cis-undecaprenyl diphosphate + H(+). The protein operates within cell wall biogenesis; peptidoglycan biosynthesis. Its function is as follows. Peptidoglycan polymerase that catalyzes glycan chain elongation from lipid-linked precursors. The polypeptide is Biosynthetic peptidoglycan transglycosylase (Escherichia coli O139:H28 (strain E24377A / ETEC)).